The primary structure comprises 245 residues: tRNA (guanine-N(1)-)-methyltransferase (245 aa).

S-adenosyl-L-methionine-binding positions include glycine 114 and isoleucine 133–leucine 138.

It belongs to the RNA methyltransferase TrmD family. Homodimer.

It is found in the cytoplasm. The enzyme catalyses guanosine(37) in tRNA + S-adenosyl-L-methionine = N(1)-methylguanosine(37) in tRNA + S-adenosyl-L-homocysteine + H(+). Specifically methylates guanosine-37 in various tRNAs. This is tRNA (guanine-N(1)-)-methyltransferase from Prochlorococcus marinus (strain MIT 9312).